Reading from the N-terminus, the 247-residue chain is Carboxy-S-adenosyl-L-methionine synthase (247 aa).

Residues Tyr-39, 64 to 66, 89 to 90, 117 to 118, Asn-132, and Arg-199 contribute to the S-adenosyl-L-methionine site; these read GCS, DN, and DI.

This sequence belongs to the class I-like SAM-binding methyltransferase superfamily. Cx-SAM synthase family. Homodimer.

The enzyme catalyses prephenate + S-adenosyl-L-methionine = carboxy-S-adenosyl-L-methionine + 3-phenylpyruvate + H2O. Functionally, catalyzes the conversion of S-adenosyl-L-methionine (SAM) to carboxy-S-adenosyl-L-methionine (Cx-SAM). This is Carboxy-S-adenosyl-L-methionine synthase from Salmonella paratyphi B (strain ATCC BAA-1250 / SPB7).